The following is a 354-amino-acid chain: Nicotinate-nucleotide--dimethylbenzimidazole phosphoribosyltransferase (354 aa).

The active-site Proton acceptor is Glu-317.

Belongs to the CobT family. As to quaternary structure, homodimer.

It catalyses the reaction 5,6-dimethylbenzimidazole + nicotinate beta-D-ribonucleotide = alpha-ribazole 5'-phosphate + nicotinate + H(+). It functions in the pathway nucleoside biosynthesis; alpha-ribazole biosynthesis; alpha-ribazole from 5,6-dimethylbenzimidazole: step 1/2. Its function is as follows. Catalyzes the synthesis of alpha-ribazole-5'-phosphate from nicotinate mononucleotide (NAMN) and 5,6-dimethylbenzimidazole (DMB). This is Nicotinate-nucleotide--dimethylbenzimidazole phosphoribosyltransferase from Salmonella arizonae (strain ATCC BAA-731 / CDC346-86 / RSK2980).